The following is a 232-amino-acid chain: Ribonuclease 3 (232 aa).

Residues 5-134 (QTVLKNHFAI…FLGALLLDKD (130 aa)) form the RNase III domain. Glutamate 47 lines the Mg(2+) pocket. Residue aspartate 51 is part of the active site. Positions 120 and 123 each coordinate Mg(2+). Glutamate 123 is a catalytic residue. The DRBM domain occupies 160–229 (DYKTHLQELL…AKNAVEKGLD (70 aa)).

This sequence belongs to the ribonuclease III family. As to quaternary structure, homodimer. It depends on Mg(2+) as a cofactor.

Its subcellular location is the cytoplasm. It catalyses the reaction Endonucleolytic cleavage to 5'-phosphomonoester.. Functionally, digests double-stranded RNA. Involved in the processing of primary rRNA transcript to yield the immediate precursors to the large and small rRNAs (23S and 16S). Processes some mRNAs, and tRNAs when they are encoded in the rRNA operon. Processes pre-crRNA and tracrRNA of type II CRISPR loci if present in the organism. The protein is Ribonuclease 3 of Streptococcus pneumoniae serotype 4 (strain ATCC BAA-334 / TIGR4).